The chain runs to 158 residues: Endoribonuclease YbeY (158 aa).

3 residues coordinate Zn(2+): H117, H121, and H127.

It belongs to the endoribonuclease YbeY family. Zn(2+) serves as cofactor.

It localises to the cytoplasm. Single strand-specific metallo-endoribonuclease involved in late-stage 70S ribosome quality control and in maturation of the 3' terminus of the 16S rRNA. This Buchnera aphidicola subsp. Schizaphis graminum (strain Sg) protein is Endoribonuclease YbeY.